We begin with the raw amino-acid sequence, 277 residues long: Large ribosomal subunit protein uL2 (277 aa).

The tract at residues 222–258 (GSVMNPCDHPHGGGEGRSPIGRPSPVTPWGKPALGYK) is disordered.

It belongs to the universal ribosomal protein uL2 family. Part of the 50S ribosomal subunit. Forms a bridge to the 30S subunit in the 70S ribosome.

Its function is as follows. One of the primary rRNA binding proteins. Required for association of the 30S and 50S subunits to form the 70S ribosome, for tRNA binding and peptide bond formation. It has been suggested to have peptidyltransferase activity; this is somewhat controversial. Makes several contacts with the 16S rRNA in the 70S ribosome. This Clostridium perfringens (strain 13 / Type A) protein is Large ribosomal subunit protein uL2.